A 382-amino-acid chain; its full sequence is D-galactonate dehydratase (382 aa).

Asp-183 is a binding site for Mg(2+). His-185 acts as the Proton donor in catalysis. Residues Glu-209 and Glu-235 each coordinate Mg(2+). The active-site Proton acceptor is the His-285.

Belongs to the mandelate racemase/muconate lactonizing enzyme family. GalD subfamily. Requires Mg(2+) as cofactor.

The catalysed reaction is D-galactonate = 2-dehydro-3-deoxy-D-galactonate + H2O. Its pathway is carbohydrate acid metabolism; D-galactonate degradation; D-glyceraldehyde 3-phosphate and pyruvate from D-galactonate: step 1/3. Catalyzes the dehydration of D-galactonate to 2-keto-3-deoxy-D-galactonate. The protein is D-galactonate dehydratase of Verminephrobacter eiseniae (strain EF01-2).